We begin with the raw amino-acid sequence, 203 residues long: LexA repressor (203 aa).

The segment at residues 30–50 is a DNA-binding region (H-T-H motif); that stretch reads VREICQAVSLKSTSTVHGHLK. Residues S127 and K164 each act as for autocatalytic cleavage activity in the active site.

The protein belongs to the peptidase S24 family. In terms of assembly, homodimer.

It carries out the reaction Hydrolysis of Ala-|-Gly bond in repressor LexA.. In terms of biological role, represses a number of genes involved in the response to DNA damage (SOS response), including recA and lexA. In the presence of single-stranded DNA, RecA interacts with LexA causing an autocatalytic cleavage which disrupts the DNA-binding part of LexA, leading to derepression of the SOS regulon and eventually DNA repair. In Clostridium perfringens (strain 13 / Type A), this protein is LexA repressor.